Here is a 380-residue protein sequence, read N- to C-terminus: Flap endonuclease 1 (380 aa).

An N-domain region spans residues 1–104 (MGIQGLAKLI…GELAKRSERR (104 aa)). R19 carries the post-translational modification Symmetric dimethylarginine; by PRMT5. Position 34 (D34) interacts with Mg(2+). Residues R47 and R70 each contribute to the DNA site. K80 carries the post-translational modification N6-acetyllysine. D86 contacts Mg(2+). Symmetric dimethylarginine; by PRMT5 is present on residues R100 and R104. The interval 122-253 (EVEKFTKRLV…KRAVDLIQKH (132 aa)) is I-domain. E158, E160, D179, and D181 together coordinate Mg(2+). E158 contributes to the DNA binding site. Phosphoserine; by CDK2 is present on S187. R192 is subject to Symmetric dimethylarginine; by PRMT5. S197 is modified (phosphoserine). The DNA site is built by G231 and D233. A Mg(2+)-binding site is contributed by D233. Phosphoserine is present on residues S255, S293, and S335. T336 is modified (phosphothreonine). The interaction with PCNA stretch occupies residues 336-344 (TQGRLDDFF). The tract at residues 349–380 (SLSSAKRKEPEPKGAAKKKQRLGPAGKFKRGK) is disordered. N6-acetyllysine is present on residues K354, K375, K377, and K380. Residues 363–380 (AAKKKQRLGPAGKFKRGK) are compositionally biased toward basic residues.

This sequence belongs to the XPG/RAD2 endonuclease family. FEN1 subfamily. In terms of assembly, interacts with PCNA. Three molecules of FEN1 bind to one PCNA trimer with each molecule binding to one PCNA monomer. PCNA stimulates the nuclease activity without altering cleavage specificity. The C-terminal domain binds EP300; can bind simultaneously to both PCNA and EP300. Interacts with DDX11; this interaction is direct and increases flap endonuclease activity of FEN1. Interacts with WDR4; regulating its endonuclease activity. Interacts with POLB. Requires Mg(2+) as cofactor. Post-translationally, acetylated by EP300. Acetylation inhibits both endonuclease and exonuclease activity. Acetylation also reduces DNA-binding activity but does not affect interaction with PCNA or EP300. In terms of processing, phosphorylation upon DNA damage induces relocalization to the nuclear plasma. Phosphorylation at Ser-187 by CDK2 occurs during late S-phase and results in dissociation from PCNA. Methylation at Arg-192 by PRMT5 impedes Ser-187 phosphorylation and increases interaction with PCNA.

The protein localises to the nucleus. It is found in the nucleolus. It localises to the nucleoplasm. The protein resides in the mitochondrion. Functionally, structure-specific nuclease with 5'-flap endonuclease and 5'-3' exonuclease activities involved in DNA replication and repair. During DNA replication, cleaves the 5'-overhanging flap structure that is generated by displacement synthesis when DNA polymerase encounters the 5'-end of a downstream Okazaki fragment. It enters the flap from the 5'-end and then tracks to cleave the flap base, leaving a nick for ligation. Also involved in the long patch base excision repair (LP-BER) pathway, by cleaving within the apurinic/apyrimidinic (AP) site-terminated flap. Acts as a genome stabilization factor that prevents flaps from equilibrating into structures that lead to duplications and deletions. Also possesses 5'-3' exonuclease activity on nicked or gapped double-stranded DNA, and exhibits RNase H activity. Also involved in replication and repair of rDNA and in repairing mitochondrial DNA. This chain is Flap endonuclease 1, found in Ovis aries (Sheep).